Here is a 568-residue protein sequence, read N- to C-terminus: Urease subunit beta (568 aa).

The Urease domain occupies 131-568; that stretch reads GGIDTHIHFI…LSLAQLYNLF (438 aa). Ni(2+) is bound by residues His136, His138, and Lys219. Lys219 is subject to N6-carboxylysine. His221 is a substrate binding site. Ni(2+)-binding residues include His248 and His274. His321 serves as the catalytic Proton donor. Position 361 (Asp361) interacts with Ni(2+).

Belongs to the metallo-dependent hydrolases superfamily. Urease alpha subunit family. As to quaternary structure, heterohexamer of 3 UreA (alpha) and 3 UreB (beta) subunits. The cofactor is Ni cation. Post-translationally, carboxylation allows a single lysine to coordinate two nickel ions.

Its subcellular location is the cytoplasm. It carries out the reaction urea + 2 H2O + H(+) = hydrogencarbonate + 2 NH4(+). It participates in nitrogen metabolism; urea degradation; CO(2) and NH(3) from urea (urease route): step 1/1. The protein is Urease subunit beta of Helicobacter heilmannii.